A 358-amino-acid polypeptide reads, in one-letter code: Snurportin-1 (358 aa).

Residue Met1 is modified to N-acetylmethionine. 2 disordered regions span residues 1-39 and 69-89; these read MEELSQALASSFSVSQELNSTAAPHPRLSQYKSKYSSLE and DWTGMESGEEEKKKDEEEMDL. The interval 1 to 65 is necessary for interaction with KPNB1 and m3G-cap U1 and U5 snRNP import receptor activity; it reads MEELSQALAS…LDYVNHARRL (65 aa). Residues 1–160 are necessary for interaction with XPO1; sequence MEELSQALAS…NRFSSLLPGG (160 aa). Composition is skewed to polar residues over residues 7–22 and 30–39; these read ALASSFSVSQELNSTA and QYKSKYSSLE. Positions 11–73 constitute an IBB domain; that stretch reads SFSVSQELNS…RLAEDDWTGM (63 aa). The residue at position 75 (Ser75) is a Phosphoserine. Positions 128–130 are interaction with m3G-cap structure; the sequence is GKR. The segment at 210 to 329 is necessary for binding to the m3G-cap structure; sequence MNSKLPEEEG…DTKEKLTHKA (120 aa). The span at 315-341 shows a compositional bias: basic and acidic residues; sequence KRSQEDTKEKLTHKASENGHYELEHLS. The disordered stretch occupies residues 315-358; sequence KRSQEDTKEKLTHKASENGHYELEHLSTPKLRSPPHSSESLMDS. The segment covering 349 to 358 has biased composition (polar residues); it reads PHSSESLMDS. At Ser351 the chain carries Phosphoserine.

Belongs to the snurportin family. As to quaternary structure, component of an import snRNP complex composed of KPNB1, SNUPN, SMN1 and ZNF259. Component of a nuclear export receptor complex composed of KPNB1, Ran, SNUPN and XPO1. Found in a trimeric export complex with SNUPN, Ran and XPO1. Interacts (via IBB domain) with KPNB1; the interaction is direct. Interacts with DDX20, IPO7, SMN1, SNRPB and XPO1. Interacts directly with XPO1. Its interaction with XPO1 and binding to m3G-cap U snRNPs appears to be mutually exclusive. Can form homomers.

It is found in the nucleus. It localises to the cytoplasm. In terms of biological role, functions as an U snRNP-specific nuclear import adapter. Involved in the trimethylguanosine (m3G)-cap-dependent nuclear import of U snRNPs. Binds specifically to the terminal m3G-cap U snRNAs. The sequence is that of Snurportin-1 (Snupn) from Rattus norvegicus (Rat).